Reading from the N-terminus, the 228-residue chain is Ribose-5-phosphate isomerase A (228 aa).

Residues 32–35 (TGST), 85–88 (DGAD), and 98–101 (KGGG) each bind substrate. Glu-107 functions as the Proton acceptor in the catalytic mechanism. Position 125 (Lys-125) interacts with substrate.

The protein belongs to the ribose 5-phosphate isomerase family. As to quaternary structure, homodimer.

The catalysed reaction is aldehydo-D-ribose 5-phosphate = D-ribulose 5-phosphate. The protein operates within carbohydrate degradation; pentose phosphate pathway; D-ribose 5-phosphate from D-ribulose 5-phosphate (non-oxidative stage): step 1/1. Functionally, catalyzes the reversible conversion of ribose-5-phosphate to ribulose 5-phosphate. The protein is Ribose-5-phosphate isomerase A of Ralstonia pickettii (strain 12J).